Consider the following 479-residue polypeptide: Poly(A) polymerase catalytic subunit (479 aa).

Residues aspartate 202 and aspartate 204 contribute to the active site. Residues aspartate 202, aspartate 204, and aspartate 253 each coordinate Ca(2+).

It belongs to the poxviridae poly(A) polymerase catalytic subunit family. As to quaternary structure, heterodimer of a large (catalytic) subunit and a small (regulatory) subunit.

It catalyses the reaction RNA(n) + ATP = RNA(n)-3'-adenine ribonucleotide + diphosphate. Polymerase that creates the 3'-poly(A) tail of mRNA's. In Homo sapiens (Human), this protein is Poly(A) polymerase catalytic subunit (OPG063).